A 140-amino-acid chain; its full sequence is MDSRIPYDDYPVVFLPAYENPPAWIPPHERVYHPDYNNELTQFLPRIVTLKKPPGAQLGFNIRGGKASQLGIFISKVIPDSDAHRAGLQEGDQVLAVNDVDFQDIEHSKAVEILKTAREISMRVRFFPYNYHRQKERTVH.

Residues Ile47 to Tyr129 enclose the PDZ domain.

Interacts with ATP2B1, ATP2B2, ATP2B3, ATP2B4 and ATP7A. Interacts with PLEKHA7 (via WW domains) at zonula adherens; this interaction is essential for the interaction between PLEKHA7 and the ADAM10-binding protein TSPAN33. Interacts with SLC5A6.

It is found in the cytoplasm. The protein resides in the cell junction. Its subcellular location is the adherens junction. The protein localises to the cell membrane. Mediates docking of ADAM10 to zonula adherens by interacting with PLEKHA7 which is required for PLEKHA7 to interact with the ADAM10-binding protein TSPAN33. This is PDZ domain-containing protein 11 (PDZD11) from Bos taurus (Bovine).